Reading from the N-terminus, the 414-residue chain is Putative gustatory receptor 47b (414 aa).

The Cytoplasmic portion of the chain corresponds to 1-5 (MQRDD). The helical transmembrane segment at 6-26 (GFVYCYGNLYSLLLYWGLVTI) threads the bilayer. Over 27–40 (RVRSPDRGGAFSNR) the chain is Extracellular. A helical transmembrane segment spans residues 41-61 (WTVCYALFTRSFMVICFMATV). Residues 62–142 (MTKLRDPEMS…QWNYRRARLK (81 aa)) are Cytoplasmic-facing. The chain crosses the membrane as a helical span at residues 143–163 (YWYGTVIVGFCFFSFSISLIF). At 164–182 (DTTRCTCGIPSTLLMAFTY) the chain is on the extracellular side. Residues 183–203 (TLLTSSVGLLGFVHIGIMDFI) traverse the membrane as a helical segment. The Cytoplasmic segment spans residues 204–249 (RVRLRLVQQLLHQLYQADDSSEVHERIAYLFEMSKRCSFLLAELNG). The helical transmembrane segment at 250 to 270 (VFGFAAAAGIFYDFTIMTCFV) threads the bilayer. The Extracellular portion of the chain corresponds to 271 to 291 (YVICQKLLEREPWDPEYVYML). A helical transmembrane segment spans residues 292-312 (LHVAIHTYKVVITSTYGYLLL). Residues 313–364 (REKRNCMHLLSQYSRYFSGQDVARRKTEDFQHWRMHNRQAAMVGSTTLLSVS) are Cytoplasmic-facing. The chain crosses the membrane as a helical span at residues 365–385 (TIYLVYNGMANYVIILVQLLF). Residues 386–414 (QQQQIKDHQLTSGKDVDIVGPMGPITHMD) are Extracellular-facing.

It belongs to the insect chemoreceptor superfamily. Gustatory receptor (GR) family. Gr57a subfamily. In terms of tissue distribution, expressed in neurons of the terminal external chemosensory organ of larvae.

The protein localises to the cell membrane. Functionally, probable gustatory receptor which mediates acceptance or avoidance behavior, depending on its substrates. In Drosophila melanogaster (Fruit fly), this protein is Putative gustatory receptor 47b (Gr47b).